A 99-amino-acid polypeptide reads, in one-letter code: Large ribosomal subunit protein uL23 (99 aa).

Belongs to the universal ribosomal protein uL23 family. Part of the 50S ribosomal subunit. Contacts protein L29, and trigger factor when it is bound to the ribosome.

In terms of biological role, one of the early assembly proteins it binds 23S rRNA. One of the proteins that surrounds the polypeptide exit tunnel on the outside of the ribosome. Forms the main docking site for trigger factor binding to the ribosome. In Azotobacter vinelandii (strain DJ / ATCC BAA-1303), this protein is Large ribosomal subunit protein uL23.